Here is a 278-residue protein sequence, read N- to C-terminus: Tryptophan synthase alpha chain (278 aa).

Catalysis depends on proton acceptor residues Glu-50 and Asp-61.

This sequence belongs to the TrpA family. In terms of assembly, tetramer of two alpha and two beta chains.

It catalyses the reaction (1S,2R)-1-C-(indol-3-yl)glycerol 3-phosphate + L-serine = D-glyceraldehyde 3-phosphate + L-tryptophan + H2O. Its pathway is amino-acid biosynthesis; L-tryptophan biosynthesis; L-tryptophan from chorismate: step 5/5. Functionally, the alpha subunit is responsible for the aldol cleavage of indoleglycerol phosphate to indole and glyceraldehyde 3-phosphate. In Rhodopseudomonas palustris (strain BisA53), this protein is Tryptophan synthase alpha chain.